Consider the following 570-residue polypeptide: Molecular chaperone MKKS (570 aa).

192–199 is a binding site for ATP; the sequence is GHIILGKS. The segment at 198 to 370 is substrate-binding apical domain; that stretch reads KSLIVPLKGQ…FHLIPNEATI (173 aa).

Belongs to the TCP-1 chaperonin family. As to quaternary structure, component of a complex composed at least of MKKS, BBS10, BBS12, TCP1, CCT2, CCT3, CCT4, CCT5 and CCT8. Interacts with STUB1. Interacts with BBS2 (via coiled coil domain). Interacts with CCDC28B. Interacts with BBS12. Interacts with SMARCC1, a component of the SWI/SNF complexes; the interaction takes place predominantly in the cytoplasm and may modulate SMARCC1 location. Interacts with DLEC1.

The protein resides in the cytoplasm. It is found in the cytoskeleton. It localises to the microtubule organizing center. Its subcellular location is the centrosome. The protein localises to the cytosol. The protein resides in the nucleus. Probable molecular chaperone that assists the folding of proteins upon ATP hydrolysis. Plays a role in the assembly of BBSome, a complex involved in ciliogenesis regulating transports vesicles to the cilia. May play a role in protein processing in limb, cardiac and reproductive system development. May play a role in cytokinesis. This is Molecular chaperone MKKS (MKKS) from Pongo abelii (Sumatran orangutan).